Here is a 301-residue protein sequence, read N- to C-terminus: Coiled-coil domain-containing protein 50 (301 aa).

Positions 57–131 (QVAKQLQEEE…LQEEKKRKKH (75 aa)) form a coiled coil. Basic and acidic residues-rich tracts occupy residues 123 to 142 (QEEKKRKKHYPESQEHKVYE), 161 to 175 (VYDKPRREQELSDAE), and 214 to 262 (AFKK…DKSS). Disordered regions lie at residues 123 to 175 (QEEK…SDAE) and 214 to 301 (AFKK…RRKQ).

Phosphorylated on tyrosine residues.

Functionally, involved in EGFR signaling. This is Coiled-coil domain-containing protein 50 (CCDC50) from Gallus gallus (Chicken).